A 340-amino-acid chain; its full sequence is DNA-directed RNA polymerase subunit alpha (340 aa).

The segment at 1–233 (MIQDEIKVST…DLFIPLINSE (233 aa)) is alpha N-terminal domain (alpha-NTD). Residues 265-340 (TKDVAFKHIF…IQLPKNKNYL (76 aa)) are alpha C-terminal domain (alpha-CTD).

This sequence belongs to the RNA polymerase alpha chain family. In plastids the minimal PEP RNA polymerase catalytic core is composed of four subunits: alpha, beta, beta', and beta''. When a (nuclear-encoded) sigma factor is associated with the core the holoenzyme is formed, which can initiate transcription.

It is found in the plastid. It localises to the chloroplast. The enzyme catalyses RNA(n) + a ribonucleoside 5'-triphosphate = RNA(n+1) + diphosphate. In terms of biological role, DNA-dependent RNA polymerase catalyzes the transcription of DNA into RNA using the four ribonucleoside triphosphates as substrates. The sequence is that of DNA-directed RNA polymerase subunit alpha from Marchantia polymorpha (Common liverwort).